The primary structure comprises 201 residues: Large ribosomal subunit protein uL4 (201 aa).

Positions 46-71 (QKTRAEVVGSGKKPWRQKGTGRARAG) are disordered.

This sequence belongs to the universal ribosomal protein uL4 family. In terms of assembly, part of the 50S ribosomal subunit.

Its function is as follows. One of the primary rRNA binding proteins, this protein initially binds near the 5'-end of the 23S rRNA. It is important during the early stages of 50S assembly. It makes multiple contacts with different domains of the 23S rRNA in the assembled 50S subunit and ribosome. In terms of biological role, forms part of the polypeptide exit tunnel. The polypeptide is Large ribosomal subunit protein uL4 (Shewanella piezotolerans (strain WP3 / JCM 13877)).